Reading from the N-terminus, the 509-residue chain is Tyrosine-protein kinase Lck (509 aa).

The N-myristoyl glycine moiety is linked to residue Gly-2. Positions Gly-2–Tyr-72 are interactions with CD4 and CD8. 2 S-palmitoyl cysteine lipidation sites follow: Cys-3 and Cys-5. In terms of domain architecture, SH3 spans Leu-61–Ser-121. Lys-99 is covalently cross-linked (Glycyl lysine isopeptide (Lys-Gly) (interchain with G-Cter in ubiquitin)). Residue Ser-102 is modified to Phosphoserine. An SH2 domain is found at Trp-127–Cys-224. The segment at Arg-154–Arg-242 is interaction with PTPRH. Thr-159 carries the post-translational modification Phosphothreonine. Residue Ser-162 is modified to Phosphoserine. Phosphotyrosine is present on Tyr-192. Phosphoserine is present on Ser-194. The Protein kinase domain occupies Leu-245–Phe-498. Residues Leu-251 to Val-259 and Lys-273 contribute to the ATP site. A Glycyl lysine isopeptide (Lys-Gly) (interchain with G-Cter in ubiquitin) cross-link involves residue Lys-276. The Proton acceptor role is filled by Asp-364. Position 394 is a phosphotyrosine; by autocatalysis (Tyr-394). The residue at position 505 (Tyr-505) is a Phosphotyrosine; by CSK.

The protein belongs to the protein kinase superfamily. Tyr protein kinase family. SRC subfamily. As to quaternary structure, binds to the cytoplasmic domain of cell surface receptors, such as AXL, CD2, CD4, CD5, CD8, CD44, CD45 and CD122. Also binds to effector molecules, such as PI4K, VAV1, RASA1, FYB1 and to other protein kinases including CDK1, RAF1, ZAP70 and SYK. Binds to phosphatidylinositol 3'-kinase (PI3K) from T-lymphocytes through its SH3 domain and to the tyrosine phosphorylated form of KHDRBS1/p70 through its SH2 domain. This interaction inhibits its tyrosine-kinase activity. Interacts with SQSTM1. Interacts with phosphorylated LIME1. Interacts with CBLB and PTPRH. Interacts with RUNX3. Forms a signaling complex with EPHA1, PTK2B and PI3-KINASE; upon activation by EFNA1 which may regulate T-lymphocyte migration. Associates with ZAP70 and RHOH; these interactions allow LCK-mediated RHOH and CD3 subunit phosphorylation in the presence of functional ZAP70. Interacts with UNC119; this interaction plays a crucial role in activation of LCK. Interacts with CEACAM1 (via cytoplasmic domain); mediates CEACAM1 phosphorylation resulting in PTPN6 recruitment that dephosphorylates TCR stimulation-induced CD247 and ZAP70. Interacts with CD160. Interacts with CD48. In terms of assembly, (Microbial infection) Interacts with herpes simplex virus 1 UL46; this interaction activates LCK. (Microbial infection) Interacts with HIV-1 Nef through its SH3 domain. Autophosphorylated on Tyr-394, increasing enzymatic activity, this site is dephosphorylated by PTN22. Phosphorylated on Tyr-505 by CSK, decreasing activity. Dephosphorylated by PTPRC/CD45. Dephosphorylation at Tyr-394 by PTPN2 negatively regulates T-cell receptor signaling. Dephosphorylation at Tyr-394 by DUSP22 negatively regulates T-cell receptor signaling. Post-translationally, myristoylation is required prior to palmitoylation. In terms of processing, palmitoylation regulates association with the plasma membrane and could be mediated by ZDHHC2. 'Lys-63'-linked ubiquitinated at Lys-99 and Lys-276 by UBR2; this modification is required for autophosphorylation at Tyr-394. As to expression, expressed specifically in lymphoid cells.

The protein localises to the cell membrane. It is found in the cytoplasm. It localises to the cytosol. It carries out the reaction L-tyrosyl-[protein] + ATP = O-phospho-L-tyrosyl-[protein] + ADP + H(+). The relative activities of the inhibitory tyrosine-protein kinase CSK and the activating tyrosine-protein phosphatase PTPRC/CD45 determine the level of LCK activity. These interactions allow rapid and efficient activation of LCK in response to TCR stimulation. In terms of biological role, non-receptor tyrosine-protein kinase that plays an essential role in the selection and maturation of developing T-cells in the thymus and in the function of mature T-cells. Plays a key role in T-cell antigen receptor (TCR)-linked signal transduction pathways. Constitutively associated with the cytoplasmic portions of the CD4 and CD8 surface receptors. Association of the TCR with a peptide antigen-bound MHC complex facilitates the interaction of CD4 and CD8 with MHC class II and class I molecules, respectively, thereby recruiting the associated LCK protein to the vicinity of the TCR/CD3 complex. LCK then phosphorylates tyrosine residues within the immunoreceptor tyrosine-based activation motifs (ITAM) of the cytoplasmic tails of the TCR-gamma chains and CD3 subunits, initiating the TCR/CD3 signaling pathway. Once stimulated, the TCR recruits the tyrosine kinase ZAP70, that becomes phosphorylated and activated by LCK. Following this, a large number of signaling molecules are recruited, ultimately leading to lymphokine production. LCK also contributes to signaling by other receptor molecules. Associates directly with the cytoplasmic tail of CD2, which leads to hyperphosphorylation and activation of LCK. Also plays a role in the IL2 receptor-linked signaling pathway that controls the T-cell proliferative response. Binding of IL2 to its receptor results in increased activity of LCK. Is expressed at all stages of thymocyte development and is required for the regulation of maturation events that are governed by both pre-TCR and mature alpha beta TCR. Phosphorylates other substrates including RUNX3, PTK2B/PYK2, the microtubule-associated protein MAPT, RHOH or TYROBP. Interacts with FYB2. The sequence is that of Tyrosine-protein kinase Lck (LCK) from Homo sapiens (Human).